Consider the following 416-residue polypeptide: Tyrosine aminotransferase (416 aa).

N6-(pyridoxal phosphate)lysine is present on K253.

Belongs to the class-I pyridoxal-phosphate-dependent aminotransferase family. In terms of assembly, homodimer. Requires pyridoxal 5'-phosphate as cofactor. In terms of processing, the N-terminus is blocked.

The protein localises to the cytoplasm. The protein resides in the mitochondrion. It catalyses the reaction L-tyrosine + 2-oxoglutarate = 3-(4-hydroxyphenyl)pyruvate + L-glutamate. It functions in the pathway amino-acid degradation; L-phenylalanine degradation; acetoacetate and fumarate from L-phenylalanine: step 2/6. In terms of biological role, transaminase involved in tyrosine breakdown. Converts tyrosine to p-hydroxyphenylpyruvate. This chain is Tyrosine aminotransferase, found in Trypanosoma cruzi.